The primary structure comprises 86 residues: Putative membrane protein insertion efficiency factor (86 aa).

The segment at 66-86 (FSKGGFDPVPPHDGVPGKKED) is disordered.

It belongs to the UPF0161 family.

It is found in the cell inner membrane. Functionally, could be involved in insertion of integral membrane proteins into the membrane. In Chlorobium luteolum (strain DSM 273 / BCRC 81028 / 2530) (Pelodictyon luteolum), this protein is Putative membrane protein insertion efficiency factor.